The sequence spans 426 residues: Cell adhesion molecule CEACAM16 (426 aa).

An N-terminal signal peptide occupies residues 1–22 (MKMPLTWYSWFLLSAWILNTGA). An N-linked (GlcNAc...) asparagine glycan is attached at Asn38. A disordered region spans residues 77–96 (ETPGPAHTGREAVRPDGSLD). A compositionally biased stretch (basic and acidic residues) spans 84-95 (TGREAVRPDGSL). 2 consecutive Ig-like C2-type domains span residues 134 to 219 (PPTV…LNLT) and 224 to 310 (PERV…ASVV). An intrachain disulfide couples Cys155 to Cys202. N-linked (GlcNAc...) asparagine glycosylation is present at Asn217. Cys253 and Cys294 are joined by a disulfide.

Belongs to the immunoglobulin superfamily. CEA family. As to quaternary structure, homooligomer; can for homodimers and homotetramers. Interacts with TECTA and TECTB. As to expression, expressed in cochlear outer hair cells (OHC).

It is found in the secreted. Required for proper hearing, plays a role in maintaining the integrity of the tectorial membrane. This Mus musculus (Mouse) protein is Cell adhesion molecule CEACAM16.